The following is a 233-amino-acid chain: Nickel import system ATP-binding protein NikE (233 aa).

Residues 2 to 228 (IELKHVTFGY…DRHPYTKELV (227 aa)) enclose the ABC transporter domain. 35–42 (GESGCGKS) serves as a coordination point for ATP.

This sequence belongs to the ABC transporter superfamily. As to quaternary structure, the complex is composed of two ATP-binding proteins (NikD and NikE), two transmembrane proteins (NikB and NikC) and a solute-binding protein (NikA).

Its subcellular location is the cell membrane. It catalyses the reaction Ni(2+)(out) + ATP + H2O = Ni(2+)(in) + ADP + phosphate + H(+). In terms of biological role, part of the ABC transporter complex NikABCDE (Opp2) involved in nickel import. Probably responsible for energy coupling to the transport system. This is Nickel import system ATP-binding protein NikE from Staphylococcus aureus (strain MSSA476).